Consider the following 364-residue polypeptide: UDP-N-acetylglucosamine--N-acetylmuramyl-(pentapeptide) pyrophosphoryl-undecaprenol N-acetylglucosamine transferase (364 aa).

UDP-N-acetyl-alpha-D-glucosamine is bound by residues 10-12, N128, R170, S199, I250, and Q295; that span reads TGG.

The protein belongs to the glycosyltransferase 28 family. MurG subfamily.

Its subcellular location is the cell inner membrane. The catalysed reaction is di-trans,octa-cis-undecaprenyl diphospho-N-acetyl-alpha-D-muramoyl-L-alanyl-D-glutamyl-meso-2,6-diaminopimeloyl-D-alanyl-D-alanine + UDP-N-acetyl-alpha-D-glucosamine = di-trans,octa-cis-undecaprenyl diphospho-[N-acetyl-alpha-D-glucosaminyl-(1-&gt;4)]-N-acetyl-alpha-D-muramoyl-L-alanyl-D-glutamyl-meso-2,6-diaminopimeloyl-D-alanyl-D-alanine + UDP + H(+). It participates in cell wall biogenesis; peptidoglycan biosynthesis. Cell wall formation. Catalyzes the transfer of a GlcNAc subunit on undecaprenyl-pyrophosphoryl-MurNAc-pentapeptide (lipid intermediate I) to form undecaprenyl-pyrophosphoryl-MurNAc-(pentapeptide)GlcNAc (lipid intermediate II). The protein is UDP-N-acetylglucosamine--N-acetylmuramyl-(pentapeptide) pyrophosphoryl-undecaprenol N-acetylglucosamine transferase of Chlorobium limicola (strain DSM 245 / NBRC 103803 / 6330).